Consider the following 168-residue polypeptide: Small ribosomal subunit protein uS5 (168 aa).

One can recognise an S5 DRBM domain in the interval 14–77 (FEERVVSINR…EAAKKNLITV (64 aa)).

It belongs to the universal ribosomal protein uS5 family. Part of the 30S ribosomal subunit. Contacts proteins S4 and S8.

With S4 and S12 plays an important role in translational accuracy. Functionally, located at the back of the 30S subunit body where it stabilizes the conformation of the head with respect to the body. The sequence is that of Small ribosomal subunit protein uS5 from Lactococcus lactis subsp. lactis (strain IL1403) (Streptococcus lactis).